The chain runs to 104 residues: Inclusion membrane protein F (104 aa).

2 consecutive transmembrane segments (helical) span residues 39–59 (LVVA…SLVA) and 70–90 (LAVL…VLFI).

It localises to the secreted. It is found in the host vacuole. The protein resides in the host pathogen-containing vacuole. Its subcellular location is the host pathogen-containing vacuole membrane. Functionally, inclusion membrane protein probably involved in early modification events of the chlamydial inclusion. This chain is Inclusion membrane protein F (incF), found in Chlamydia trachomatis serovar D (strain ATCC VR-885 / DSM 19411 / UW-3/Cx).